The chain runs to 445 residues: Sporulation protein YkvU (445 aa).

The next 12 helical transmembrane spans lie at 7–29 (GIIL…NMIL), 39–61 (GLYM…ELPI), 82–104 (AFRM…LPFI), 109–131 (TYHP…TSIA), 144–166 (IAIA…FQWY), 172–194 (MAVL…YLYS), 237–259 (VNAI…GTAA), 269–291 (VAVT…MIPS), 312–334 (IFIT…GPLT), 349–371 (LLWP…IGMG), 376–395 (AFYH…YVLG), and 400–422 (LQML…LHYA).

It localises to the forespore membrane. The protein is Sporulation protein YkvU (ykvU) of Bacillus subtilis (strain 168).